The primary structure comprises 154 residues: Aspartate carbamoyltransferase regulatory chain (154 aa).

Zn(2+) contacts are provided by Cys109, Cys114, Cys138, and Cys141.

Belongs to the PyrI family. Contains catalytic and regulatory chains. The cofactor is Zn(2+).

In terms of biological role, involved in allosteric regulation of aspartate carbamoyltransferase. In Aeromonas salmonicida (strain A449), this protein is Aspartate carbamoyltransferase regulatory chain.